Consider the following 350-residue polypeptide: Solute carrier family 35 member E4 (350 aa).

The segment covering 19-30 has biased composition (low complexity); it reads GAAAGGAQAAGP. The segment at 19 to 42 is disordered; sequence GAAAGGAQAAGPPEWPPGSPQALR. The next 8 helical transmembrane spans lie at 51-71, 73-93, 110-132, 135-155, 218-238, 258-278, 279-299, and 312-332; these read MAAL…KWIF, VHGF…AALA, VLLL…RAVP, LAQL…ALLL, VTLL…AALV, ILLS…LLAL, TSAL…LILS, and YVGI…EFVA. In terms of domain architecture, EamA spans 125-179; that stretch reads NVGLRAVPLDLAQLVTTTTPLFTLALSALLLGRRHHPLQLAAMGPLCLGAACSLA.

This sequence belongs to the TPT transporter family. SLC35E subfamily.

The protein localises to the membrane. Putative transporter. The sequence is that of Solute carrier family 35 member E4 (SLC35E4) from Homo sapiens (Human).